The following is a 301-amino-acid chain: MEQLVNELIQANVGRVLVDEPLARYTTMKIGGPADILIVPKRVAGIEKTLQLVKKYKTKWTVIGRGSNLLVSDLGIEGVVIRLGEGLDHLEVEKHRVRVGGGYPLIKLSTLLSRQGLAGLEFASGIPGSVGGAVYMNAGAHKSDISNILSKALILFEDGTIDWLTHGEMEFSYRTSVLQTKRPGIVLEAEFQLQIGERERIVSVMQKNKDYRRETQPWNHPCAGSVFRNPTPYFAGDLIEKAGLRGYQIGGAQISEMHGNFIINTGGASAQDVLSLIALIKQTIKDKFGVEMHTEVEIIGR.

The FAD-binding PCMH-type domain occupies Lys29–Gly196. Residue Arg174 is part of the active site. The Proton donor role is filled by Ser225. Glu295 is a catalytic residue.

The protein belongs to the MurB family. Requires FAD as cofactor.

Its subcellular location is the cytoplasm. It carries out the reaction UDP-N-acetyl-alpha-D-muramate + NADP(+) = UDP-N-acetyl-3-O-(1-carboxyvinyl)-alpha-D-glucosamine + NADPH + H(+). It functions in the pathway cell wall biogenesis; peptidoglycan biosynthesis. Its function is as follows. Cell wall formation. In Bacillus anthracis, this protein is UDP-N-acetylenolpyruvoylglucosamine reductase 1 (murB1).